The chain runs to 379 residues: NAD-dependent protein deacetylase sirtuin-2 (379 aa).

Positions 1–10 (MSEEVSKRVE) are enriched in basic and acidic residues. Residues 1 to 32 (MSEEVSKRVEEEADTPGLEGQSDDSSDEGDAS) form a disordered region. The segment covering 21–32 (QSDDSSDEGDAS) has biased composition (acidic residues). The 281-residue stretch at 55–335 (KVLDELTLDS…MTLAELLGWK (281 aa)) folds into the Deacetylase sirtuin-type domain. NAD(+) contacts are provided by residues 83–87 (AGIST), 93–95 (DFR), and 165–168 (QNID). H185 functions as the Proton acceptor in the catalytic mechanism. Zn(2+)-binding residues include C193, C198, C219, and C222. Residues 260-261 (TS), 284-286 (NME), and C321 each bind NAD(+). The segment covering 349 to 361 (IDSKDAKKTDKEA) has biased composition (basic and acidic residues). The segment at 349-379 (IDSKDAKKTDKEASQSSKSAVAEAEKTDKTE) is disordered.

Belongs to the sirtuin family. Class I subfamily. Requires Zn(2+) as cofactor.

It localises to the cytoplasm. Its subcellular location is the nucleus. The catalysed reaction is N(6)-acetyl-L-lysyl-[protein] + NAD(+) + H2O = 2''-O-acetyl-ADP-D-ribose + nicotinamide + L-lysyl-[protein]. It carries out the reaction N(6)-tetradecanoyl-L-lysyl-[protein] + NAD(+) + H2O = 2''-O-tetradecanoyl-ADP-D-ribose + nicotinamide + L-lysyl-[protein]. The enzyme catalyses N(6)-hexadecanoyl-L-lysyl-[protein] + NAD(+) + H2O = 2''-O-hexadecanoyl-ADP-D-ribose + nicotinamide + L-lysyl-[protein]. Its function is as follows. NAD-dependent protein deacetylase, which deacetylates internal lysines on histone and alpha-tubulin as well as many other proteins such as key transcription factors. Participates in the modulation of multiple and diverse biological processes such as cell cycle control, genomic integrity, microtubule dynamics, cell differentiation, metabolic networks, and autophagy. Plays a major role in the control of cell cycle progression and genomic stability. Deacetylates histone H4 at 'Lys-16' (H4K16ac) at the VEGFA promoter. Thereby contributes to regulate expression of vegfa, a key regulator of angiogenesis. In addition to protein deacetylase activity, also has activity toward long-chain fatty acyl groups and mediates protein-lysine demyristoylation and depalmitoylation of target proteins. This chain is NAD-dependent protein deacetylase sirtuin-2 (sirt2), found in Danio rerio (Zebrafish).